The following is a 316-amino-acid chain: Membrane protein UL148 (316 aa).

A signal peptide spans 1–20; the sequence is MLRLLFTLVLLALYGPSVDA. Residues 286–308 form a helical membrane-spanning segment; sequence FIVQYLNTLLITMMAAIWARVLI.

In terms of assembly, interacts with host SEL1L.

Its subcellular location is the host endoplasmic reticulum membrane. Its function is as follows. Chaperone protein that plays an important role in HCMV tropism. Cooperates with UL116 to regulate the abundance of gH-gL complexes in virion. Favors the incorporation of gL into virions once UL116 has regulated the early folding steps of virion assembly. Interacts with the host ERAD machinery and slows gO decay which would otherwise be constitutively degraded. Reorganizes the host endoplasmic reticulum and activates the unfolded protein response. Additionally, plays a role in the evasion of antiviral immune response by down-regulating cell surface expression of host CD58. Mechanistically, interacts with host CD58 and retains its immature form intracellularly. The capacity to cause endoplasmic reticulum reorganization and the intracellular retention of host CD58 are functionally independent properties. The chain is Membrane protein UL148 (UL148) from Human cytomegalovirus (strain Merlin) (HHV-5).